The following is a 452-amino-acid chain: Phosphoglucosamine mutase (452 aa).

S104 serves as the catalytic Phosphoserine intermediate. Mg(2+) contacts are provided by S104, D246, D248, and D250. Phosphoserine is present on S104.

Belongs to the phosphohexose mutase family. The cofactor is Mg(2+). Post-translationally, activated by phosphorylation.

It carries out the reaction alpha-D-glucosamine 1-phosphate = D-glucosamine 6-phosphate. Its function is as follows. Catalyzes the conversion of glucosamine-6-phosphate to glucosamine-1-phosphate. The chain is Phosphoglucosamine mutase from Streptomyces coelicolor (strain ATCC BAA-471 / A3(2) / M145).